The sequence spans 591 residues: MKKISLPKIGIRPVIDGRRMGVRESLEEQTMNMAKATAALLTEKLRHACGAAVECVISDTCIAGMAEAAACEEKFSSQNVGLTITVTPCWCYGSETIDMDPTRPKAIWGFNGTERPGAVYLAAALAAHSQKGIPAFSIYGHDVQDADDTSIPADVEEKLLRFARAGLAVASMKGKSYLSLGGVSMGIAGSIVDHNFFESWLGMKVQAVDMTELRRRIDQKIYDEAELEMALAWADKNFRYGEDENNKQYQRNAEQSRAVLRESLLMAMCIRDMMQGNSKLADIGRVEESLGYNAIAAGFQGQRHWTDQYPNGDTAEAILNSSFDWNGVREPFVVATENDSLNGVAMLMGHQLTGTAQVFADVRTYWSPEAIERVTGHKLDGLAEHGIIHLINSGSAALDGSCKQRDSEGNPTMKPHWEISQKEADACLAATEWCPAIHEYFRGGGYSSRFLTEGGVPFTMTRVNIIKGLGPVLQIAEGWSVELPKDVHDILNKRTNSTWPTTWFAPRLTGKGPFTDVYSIMANWGANHGVLTIGHVGADFITLASMLRIPVCMHNVEETKVYRPSAWAAHGMDIEGQDYRACQNYGPLYKR.

Residues Glu337 and Asp361 each act as proton acceptor in the active site. Residues Glu337, Asp361, and His528 each coordinate Mn(2+).

This sequence belongs to the L-fucose isomerase family. Homohexamer. The cofactor is Mn(2+).

Its subcellular location is the cytoplasm. It catalyses the reaction L-fucose = L-fuculose. It functions in the pathway carbohydrate degradation; L-fucose degradation; L-lactaldehyde and glycerone phosphate from L-fucose: step 1/3. Functionally, converts the aldose L-fucose into the corresponding ketose L-fuculose. In Escherichia coli (strain SE11), this protein is L-fucose isomerase.